We begin with the raw amino-acid sequence, 1543 residues long: Rho guanine nucleotide exchange factor 12 (1543 aa).

The interval 1 to 62 is disordered; sequence MSGTQSTITD…KTKSSSEESR (62 aa). The residue at position 2 (Ser2) is an N-acetylserine. The span at 28–45 shows a compositional bias: basic and acidic residues; it reads SPTDKKQKVERSSSHDFD. Ser41 bears the Phosphoserine mark. Residues 72–151 enclose the PDZ domain; that stretch reads CVIIQKDDNG…LTVQGRPPGS (80 aa). Residues 194-262 are a coiled coil; it reads VGEENNVVHN…LSKATGSAQD (69 aa). The segment at 281-355 is disordered; sequence AEADPGDGLC…GAPHIIGAED (75 aa). The segment covering 293–312 has biased composition (low complexity); the sequence is DWSSGDASRPSSDSADSPKS. Position 309 is a phosphoserine (Ser309). Basic and acidic residues predominate over residues 313–329; the sequence is SLRERSYLEEAPERSEG. Ser341 is subject to Phosphoserine. Positions 367–558 constitute an RGSL domain; that stretch reads GQCSCFQSIE…LMYMKYLGVK (192 aa). A disordered region spans residues 574–710; that stretch reads FLPKIKQSMK…DSTPRVPTTV (137 aa). Residues 582–592 are compositionally biased toward basic and acidic residues; that stretch reads MKKDREGEEKG. Ser637 bears the Phosphoserine mark. The segment covering 663 to 676 has biased composition (low complexity); sequence ASSMSSATSGTALS. Thr736 is subject to Phosphothreonine. The region spanning 787 to 977 is the DH domain; the sequence is KRQEVINELF…RQILNYVNQA (191 aa). A coiled-coil region spans residues 981–1004; that stretch reads AENKQRLEDYQRRLDTSNLKLSEY. The 114-residue stretch at 1019 to 1132 folds into the PH domain; sequence KMIHEGPLVW…WQDLICRMAA (114 aa). Residues 1137-1158 are disordered; sequence QSTKPIPLPQPPPCEGDNDEEE. Residues Ser1288, Ser1327, and Ser1377 each carry the phosphoserine modification. Disordered regions lie at residues 1386 to 1405 and 1441 to 1468; these read EAHS…KEEK and PVTG…GPVS. Polar residues predominate over residues 1450–1460; sequence SSHQQQHSPQN. Phosphoserine is present on residues Ser1457 and Ser1540.

As to quaternary structure, interacts with GNA12 and GNA13, probably through the RGS-like domain, with RHOA, PLXNB1 and PLXNB2, and through its PDZ domain with IGF1R beta subunit. Interacts with GCSAM. Found in a complex with ARHGEF11 and ARHGEF12; binding to ARHGEF11 and ARHGEF12 enhances CDC42 GEF activity of PLEKHG4B, and PLEKHG4B, in turn, inhibits ARHGEF11- and ARHGEF12-mediated RHOA activation. In terms of tissue distribution, expressed in brain, predominantly in neuronal cell bodies.

It is found in the cytoplasm. Its subcellular location is the membrane. May play a role in the regulation of RhoA GTPase by guanine nucleotide-binding alpha-12 (GNA12) and alpha-13 (GNA13). Acts as guanine nucleotide exchange factor (GEF) for RhoA GTPase and may act as GTPase-activating protein (GAP) for GNA12 and GNA13. This is Rho guanine nucleotide exchange factor 12 (Arhgef12) from Mus musculus (Mouse).